Here is a 481-residue protein sequence, read N- to C-terminus: 3-isopropylmalate dehydratase large subunit (481 aa).

[4Fe-4S] cluster-binding residues include cysteine 363, cysteine 423, and cysteine 426. The tract at residues 437–463 (GQRAASTSNRNFEGRQGRGGRTHLVSP) is disordered.

This sequence belongs to the aconitase/IPM isomerase family. LeuC type 1 subfamily. In terms of assembly, heterodimer of LeuC and LeuD. It depends on [4Fe-4S] cluster as a cofactor.

The enzyme catalyses (2R,3S)-3-isopropylmalate = (2S)-2-isopropylmalate. It participates in amino-acid biosynthesis; L-leucine biosynthesis; L-leucine from 3-methyl-2-oxobutanoate: step 2/4. Functionally, catalyzes the isomerization between 2-isopropylmalate and 3-isopropylmalate, via the formation of 2-isopropylmaleate. This chain is 3-isopropylmalate dehydratase large subunit, found in Salinispora arenicola (strain CNS-205).